We begin with the raw amino-acid sequence, 350 residues long: Protein memo-1 homolog (350 aa).

Belongs to the MEMO1 family. Interacts with rho-1. Expressed in neuronal and non-neuronal cells in the head and tail, pharyngeal cells, spermatheca, distal tip cells, anchor cell and the intestine.

In terms of biological role, plays a role in the oxidative stress response and the maintenance of longevity by regulating the interaction between GTPase rho-1 and oxidase bli-3. In turn, this serves to modulate bli-3 activity and the control of reactive oxygen species production. May control cell migration by relaying extracellular chemotactic signals to the microtubule cytoskeleton. This Caenorhabditis elegans protein is Protein memo-1 homolog.